An 80-amino-acid chain; its full sequence is Cytochrome c oxidase subunit 7B, mitochondrial (80 aa).

Residues 1–24 (MFPLVKNALNRLQVRSIQQTMARQ) constitute a mitochondrion transit peptide. At 25–32 (SHQKRTPD) the chain is on the mitochondrial matrix side. Residues 33–59 (FHDKYGNAVLASGATFCIVTWTYVATQ) form a helical membrane-spanning segment. The Mitochondrial intermembrane portion of the chain corresponds to 60–80 (VGIEWNLSPVGRVTPKEWRNQ).

Belongs to the cytochrome c oxidase VIIb family. In terms of assembly, component of the cytochrome c oxidase (complex IV, CIV), a multisubunit enzyme composed of 14 subunits. The complex is composed of a catalytic core of 3 subunits MT-CO1, MT-CO2 and MT-CO3, encoded in the mitochondrial DNA, and 11 supernumerary subunits COX4I, COX5A, COX5B, COX6A, COX6B, COX6C, COX7A, COX7B, COX7C, COX8 and NDUFA4, which are encoded in the nuclear genome. The complex exists as a monomer or a dimer and forms supercomplexes (SCs) in the inner mitochondrial membrane with NADH-ubiquinone oxidoreductase (complex I, CI) and ubiquinol-cytochrome c oxidoreductase (cytochrome b-c1 complex, complex III, CIII), resulting in different assemblies (supercomplex SCI(1)III(2)IV(1) and megacomplex MCI(2)III(2)IV(2)).

Its subcellular location is the mitochondrion inner membrane. Its pathway is energy metabolism; oxidative phosphorylation. In terms of biological role, component of the cytochrome c oxidase, the last enzyme in the mitochondrial electron transport chain which drives oxidative phosphorylation. The respiratory chain contains 3 multisubunit complexes succinate dehydrogenase (complex II, CII), ubiquinol-cytochrome c oxidoreductase (cytochrome b-c1 complex, complex III, CIII) and cytochrome c oxidase (complex IV, CIV), that cooperate to transfer electrons derived from NADH and succinate to molecular oxygen, creating an electrochemical gradient over the inner membrane that drives transmembrane transport and the ATP synthase. Cytochrome c oxidase is the component of the respiratory chain that catalyzes the reduction of oxygen to water. Electrons originating from reduced cytochrome c in the intermembrane space (IMS) are transferred via the dinuclear copper A center (CU(A)) of subunit 2 and heme A of subunit 1 to the active site in subunit 1, a binuclear center (BNC) formed by heme A3 and copper B (CU(B)). The BNC reduces molecular oxygen to 2 water molecules using 4 electrons from cytochrome c in the IMS and 4 protons from the mitochondrial matrix. Plays a role in proper central nervous system (CNS) development in vertebrates. The polypeptide is Cytochrome c oxidase subunit 7B, mitochondrial (COX7B) (Pongo abelii (Sumatran orangutan)).